A 798-amino-acid chain; its full sequence is Tripartite terminase subunit 1 (798 aa).

The C3H1-type zinc-finger motif lies at 191–219 (CFQCYEELMAVPNQGRSINRRMQGLLCDH). The segment covering 416-429 (AAGAARSRAEAASG) has biased composition (low complexity). A disordered region spans residues 416–458 (AAGAARSRAEAASGAGAGGEEGAGAAAGRGNTGGDEGAGTTTA). A compositionally biased stretch (gly residues) spans 430-452 (AGAGGEEGAGAAAGRGNTGGDEG). 674-681 (YNETFGKQ) contributes to the ATP binding site.

Belongs to the herpesviridae TRM1 protein family. Associates with TRM2 and TRM3 to form the tripartite terminase complex. Interacts with portal protein.

The protein localises to the host nucleus. Functionally, component of the molecular motor that translocates viral genomic DNA in empty capsid during DNA packaging. Forms a tripartite terminase complex together with TRM2 and TRM3 in the host cytoplasm. Once the complex reaches the host nucleus, it interacts with the capsid portal vertex. This portal forms a ring in which genomic DNA is translocated into the capsid. TRM1 carries an endonuclease activity that plays an important role for the cleavage of concatemeric viral DNA into unit length genomes. This Murid herpesvirus 1 (strain Smith) (MuHV-1) protein is Tripartite terminase subunit 1.